The sequence spans 351 residues: Peptide chain release factor 1 (351 aa).

Gln229 carries the N5-methylglutamine modification.

The protein belongs to the prokaryotic/mitochondrial release factor family. Methylated by PrmC. Methylation increases the termination efficiency of RF1.

The protein localises to the cytoplasm. Peptide chain release factor 1 directs the termination of translation in response to the peptide chain termination codons UAG and UAA. This Cereibacter sphaeroides (strain ATCC 17029 / ATH 2.4.9) (Rhodobacter sphaeroides) protein is Peptide chain release factor 1.